The following is a 207-amino-acid chain: Probable GTP-binding protein EngB (207 aa).

In terms of domain architecture, EngB-type G spans Asp-25 to Pro-202. Residues Gly-33–Ser-40, Gly-60–His-64, Asp-82–Gly-85, Thr-152–Asp-155, and Phe-181–Ala-183 contribute to the GTP site. Residues Ser-40 and Thr-62 each contribute to the Mg(2+) site.

Belongs to the TRAFAC class TrmE-Era-EngA-EngB-Septin-like GTPase superfamily. EngB GTPase family. Requires Mg(2+) as cofactor.

Functionally, necessary for normal cell division and for the maintenance of normal septation. This is Probable GTP-binding protein EngB from Albidiferax ferrireducens (strain ATCC BAA-621 / DSM 15236 / T118) (Rhodoferax ferrireducens).